The following is a 566-amino-acid chain: Insulinoma-associated protein 2 (566 aa).

The segment at Met1–Arg20 is SNAG domain. The interval Gln32–Gly117 is disordered. Residues Gly103–Ala113 are compositionally biased toward pro residues. The C2H2-type 1; atypical zinc-finger motif lies at Phe263–Cys283. The segment at Tyr291 to His313 adopts a C2H2-type 2 zinc-finger fold. Positions Arg310–Ser418 are disordered. Residues Ala318–Ser348 show a composition bias toward low complexity. Residues Glu352 to Ala369 show a composition bias toward basic and acidic residues. 3 consecutive C2H2-type zinc fingers follow at residues Phe426–His448, Phe470–His492, and Phe525–His548.

As to expression, expressed in heart, liver, skeletal muscle, kidney and pancreas, and, to a lesser extent, in brain, lung and spleen. In the pancreas, expressed in islet cells, including insulin- and glucagon-producing alpha- and beta-cells, but not in acinar cells (at protein level). Detected in adrenal glands, particularly in the deeper layer of the cortex (at protein level).

Its subcellular location is the cytoplasm. The protein localises to the nucleus. Its function is as follows. May function as a growth suppressor or tumor suppressor in liver cells and in certain neurons. The chain is Insulinoma-associated protein 2 (INSM2) from Homo sapiens (Human).